A 596-amino-acid chain; its full sequence is Cysteine--tRNA ligase (596 aa).

Residues 1-199 (MKSKTFLEKN…SQRYFEELRK (199 aa)) form a unknown region. Position 212 (Cys-212) interacts with Zn(2+). Residues 214–224 (PTVYDEVHIGN) carry the 'HIGH' region motif. Residues Cys-377, His-403, and Glu-407 each coordinate Zn(2+). The 'KMSKS' region motif lies at 435–439 (KMSKS). Residue Lys-438 participates in ATP binding.

It belongs to the class-I aminoacyl-tRNA synthetase family. As to quaternary structure, monomer. Requires Zn(2+) as cofactor.

The protein localises to the cytoplasm. It carries out the reaction tRNA(Cys) + L-cysteine + ATP = L-cysteinyl-tRNA(Cys) + AMP + diphosphate. The sequence is that of Cysteine--tRNA ligase (cysS) from Mycoplasmopsis pulmonis (strain UAB CTIP) (Mycoplasma pulmonis).